Consider the following 316-residue polypeptide: Ribosomal RNA large subunit methyltransferase F (316 aa).

The tract at residues 200-222 (EEANKSTSRKVSNLNPKEKKNTN) is disordered. A compositionally biased stretch (polar residues) spans 204–214 (KSTSRKVSNLN).

It belongs to the methyltransferase superfamily. METTL16/RlmF family.

The protein resides in the cytoplasm. It carries out the reaction adenosine(1618) in 23S rRNA + S-adenosyl-L-methionine = N(6)-methyladenosine(1618) in 23S rRNA + S-adenosyl-L-homocysteine + H(+). Specifically methylates the adenine in position 1618 of 23S rRNA. In Flavobacterium johnsoniae (strain ATCC 17061 / DSM 2064 / JCM 8514 / BCRC 14874 / CCUG 350202 / NBRC 14942 / NCIMB 11054 / UW101) (Cytophaga johnsonae), this protein is Ribosomal RNA large subunit methyltransferase F.